Consider the following 221-residue polypeptide: Urease accessory protein UreF (221 aa).

Belongs to the UreF family. In terms of assembly, ureD, UreF and UreG form a complex that acts as a GTP-hydrolysis-dependent molecular chaperone, activating the urease apoprotein by helping to assemble the nickel containing metallocenter of UreC. The UreE protein probably delivers the nickel.

The protein resides in the cytoplasm. Required for maturation of urease via the functional incorporation of the urease nickel metallocenter. In Vibrio parahaemolyticus, this protein is Urease accessory protein UreF.